A 90-amino-acid polypeptide reads, in one-letter code: Small ribosomal subunit protein uS15c (90 aa).

The protein belongs to the universal ribosomal protein uS15 family. As to quaternary structure, part of the 30S ribosomal subunit.

The protein localises to the plastid. It localises to the chloroplast. This chain is Small ribosomal subunit protein uS15c (rps15), found in Gossypium barbadense (Sea Island cotton).